Consider the following 233-residue polypeptide: Large ribosomal subunit protein uL1 (233 aa).

This sequence belongs to the universal ribosomal protein uL1 family. In terms of assembly, part of the 50S ribosomal subunit.

In terms of biological role, binds directly to 23S rRNA. The L1 stalk is quite mobile in the ribosome, and is involved in E site tRNA release. Protein L1 is also a translational repressor protein, it controls the translation of the L11 operon by binding to its mRNA. The protein is Large ribosomal subunit protein uL1 of Proteus mirabilis (strain HI4320).